A 540-amino-acid chain; its full sequence is Chaperonin GroEL (540 aa).

Residues 30–33 (TLGP), K51, 87–91 (DGTTT), G415, 479–481 (NAA), and D495 contribute to the ATP site.

It belongs to the chaperonin (HSP60) family. As to quaternary structure, forms a cylinder of 14 subunits composed of two heptameric rings stacked back-to-back. Interacts with the co-chaperonin GroES.

The protein resides in the cytoplasm. It carries out the reaction ATP + H2O + a folded polypeptide = ADP + phosphate + an unfolded polypeptide.. Together with its co-chaperonin GroES, plays an essential role in assisting protein folding. The GroEL-GroES system forms a nano-cage that allows encapsulation of the non-native substrate proteins and provides a physical environment optimized to promote and accelerate protein folding. The polypeptide is Chaperonin GroEL (Raoultella ornithinolytica (Klebsiella ornithinolytica)).